Reading from the N-terminus, the 89-residue chain is Small ribosomal subunit protein uS15 (89 aa).

Belongs to the universal ribosomal protein uS15 family. In terms of assembly, part of the 30S ribosomal subunit. Forms a bridge to the 50S subunit in the 70S ribosome, contacting the 23S rRNA.

In terms of biological role, one of the primary rRNA binding proteins, it binds directly to 16S rRNA where it helps nucleate assembly of the platform of the 30S subunit by binding and bridging several RNA helices of the 16S rRNA. Forms an intersubunit bridge (bridge B4) with the 23S rRNA of the 50S subunit in the ribosome. This is Small ribosomal subunit protein uS15 from Pseudomonas fluorescens (strain SBW25).